We begin with the raw amino-acid sequence, 1311 residues long: Ubiquitin carboxyl-terminal hydrolase 36 (1311 aa).

Low complexity-rich tracts occupy residues 120–134 (AAAA…SAGS) and 156–174 (STPT…SSSS). Positions 120-189 (AAAATNNGNS…NPNELPKPKR (70 aa)) are disordered. The USP domain occupies 212–533 (AGMINVGNTC…NSYIMFYELD (322 aa)). The Nucleophile role is filled by C221. The active-site Proton acceptor is the H492. Positions 546 to 575 (NGLRQLSNGHHHHQQQQQQHQQQQQQQPTV) are disordered. The segment covering 560–572 (QQQQQHQQQQQQQ) has biased composition (low complexity). S581 carries the post-translational modification Phosphoserine. Disordered stretches follow at residues 587 to 620 (TRFI…GHSQ), 640 to 1095 (KFQE…GCLN), and 1136 to 1311 (DHGD…QQQS). 3 stretches are compositionally biased toward low complexity: residues 605–616 (TTTTTATNNTTN), 660–716 (APAV…QQQQ), and 759–774 (TLTL…STPT). T767 carries the post-translational modification Phosphothreonine. Residues S787 and S789 each carry the phosphoserine modification. Residues 795 to 826 (SSGTPSSSTPTTTTTAAAAAASSPMQATAAAT) show a composition bias toward low complexity. A compositionally biased stretch (basic residues) spans 836 to 853 (ARKRSLPDHHHHHPHHHV). Residues 869 to 879 (PATNFNSSSSK) show a composition bias toward polar residues. Positions 880–889 (QKTDAIDEIF) are enriched in basic and acidic residues. The segment covering 896-905 (NKKRINNKNQ) has biased composition (basic residues). A compositionally biased stretch (acidic residues) spans 910–920 (GDEEEDDEETL). 2 stretches are compositionally biased toward low complexity: residues 925–942 (NNSS…PTTN) and 950–979 (VSSS…STSA). The segment covering 980 to 989 (PPSPKTPPSP) has biased composition (pro residues). At S982 the chain carries Phosphoserine. T985 carries the phosphothreonine modification. At S988 the chain carries Phosphoserine. A compositionally biased stretch (acidic residues) spans 1006–1020 (DDDDDEEEEDEDDEE). Residues 1037–1050 (PFSSQQKPTPSPST) show a composition bias toward low complexity. S1047 is subject to Phosphoserine. T1050 is modified (phosphothreonine). Positions 1060-1081 (FNGTSSSTPHVGNGYQSEPSTP) are enriched in polar residues. Low complexity-rich tracts occupy residues 1154–1176 (VVTT…TADA) and 1204–1221 (TANG…PGYN). Over residues 1246–1255 (QHASSSYRSN) the composition is skewed to polar residues. Positions 1267–1276 (GGNGGGGSGG) are enriched in gly residues.

Belongs to the peptidase C19 family. Interacts with atms/PAF1, but not with CycT.

The protein resides in the nucleus. Its subcellular location is the nucleolus. The catalysed reaction is Thiol-dependent hydrolysis of ester, thioester, amide, peptide and isopeptide bonds formed by the C-terminal Gly of ubiquitin (a 76-residue protein attached to proteins as an intracellular targeting signal).. Functionally, required for maintaining multiple types of adult stem cells, including male and female germline, epithelial follicle cell and intestinal stem cells. May function as a transcriptional repressor by continually deubiquiting histone H2B at the promoters of genes critical for cellular differentiation, thereby preventing histone H3 'Lys-4' trimethylation (H3K4). Controls selective autophagy activation by ubiquitinated proteins. The chain is Ubiquitin carboxyl-terminal hydrolase 36 (Usp36) from Drosophila willistoni (Fruit fly).